Reading from the N-terminus, the 441-residue chain is SVGFKAGVKDYKLTYYTPAYQTLDTDILAAFRVTPQPGVPPEEAGAAVAAESSTGTWTTVWTDGLTSLDRYKGRCYHIEPVAGEENQYIVYVAYPLDLFEEGSVTNMFTSIVGNVFGFKALRALRLEDLRIPPAYTKTFQGPPHGIQVERDKLNKYGRPLLGCTIKPKLGLSAKNYGRAVYECLRGGLDFTKDDENVNSQPFMRWRDRFLFCAEAIYKAQAQTGEIKGHYLNATAGTCEEMIKRAVFARELGVPIVMHDYLTGGFTANTTLAHYCRDNGLLLHIHRAMHAVIDRQKNHGIHFRVLAKALRLSGGDHIHSGTVVGKLEGERDITLGFVDLLRDDYIEKDRSRGIYFSQYWVSIPGVLPVASGGIHVWHMPALTEIFGDDSVLQFGGGTLGHPWGNAPGAVANRVALEACVQARNEGLDLAREGNEIIRKARK.

Lys-5 carries the N6,N6,N6-trimethyllysine modification. Substrate contacts are provided by Asn-114 and Thr-164. Catalysis depends on Lys-166, which acts as the Proton acceptor. Residue Lys-168 coordinates substrate. Residues Lys-192, Asp-194, and Glu-195 each coordinate Mg(2+). The residue at position 192 (Lys-192) is an N6-carboxylysine. The active-site Proton acceptor is His-285. The substrate site is built by Arg-286, His-318, and Ser-370.

Belongs to the RuBisCO large chain family. Type I subfamily. In terms of assembly, heterohexadecamer of 8 large chains and 8 small chains; disulfide-linked. The disulfide link is formed within the large subunit homodimers. The cofactor is Mg(2+). Post-translationally, the disulfide bond which can form in the large chain dimeric partners within the hexadecamer appears to be associated with oxidative stress and protein turnover.

The protein resides in the plastid. It localises to the chloroplast. The enzyme catalyses 2 (2R)-3-phosphoglycerate + 2 H(+) = D-ribulose 1,5-bisphosphate + CO2 + H2O. It carries out the reaction D-ribulose 1,5-bisphosphate + O2 = 2-phosphoglycolate + (2R)-3-phosphoglycerate + 2 H(+). In terms of biological role, ruBisCO catalyzes two reactions: the carboxylation of D-ribulose 1,5-bisphosphate, the primary event in carbon dioxide fixation, as well as the oxidative fragmentation of the pentose substrate in the photorespiration process. Both reactions occur simultaneously and in competition at the same active site. This chain is Ribulose bisphosphate carboxylase large chain, found in Drosera dichrosepala (Rusty sundew).